An 888-amino-acid polypeptide reads, in one-letter code: Molybdenum cofactor sulfurase (888 aa).

Serine 34 carries the phosphoserine modification. Lysine 264 is subject to N6-(pyridoxal phosphate)lysine. Residue cysteine 424 is part of the active site. A phosphoserine mark is found at serine 528 and serine 530. In terms of domain architecture, MOSC spans 706–867 (KQSSNSQRNA…LSVGSQVLPV (162 aa)).

This sequence belongs to the class-V pyridoxal-phosphate-dependent aminotransferase family. MOCOS subfamily. It depends on pyridoxal 5'-phosphate as a cofactor.

The catalysed reaction is Mo-molybdopterin + L-cysteine + AH2 = thio-Mo-molybdopterin + L-alanine + A + H2O. Its pathway is cofactor biosynthesis; molybdopterin biosynthesis. Functionally, sulfurates the molybdenum cofactor. Sulfation of molybdenum is essential for xanthine dehydrogenase (XDH) and aldehyde oxidase (ADO) enzymes in which molybdenum cofactor is liganded by 1 oxygen and 1 sulfur atom in active form. In vitro, the C-terminal domain is able to reduce N-hydroxylated prodrugs, such as benzamidoxime. This is Molybdenum cofactor sulfurase from Homo sapiens (Human).